We begin with the raw amino-acid sequence, 249 residues long: Tryptophan synthase alpha chain (249 aa).

Catalysis depends on proton acceptor residues E43 and D54.

Belongs to the TrpA family. As to quaternary structure, tetramer of two alpha and two beta chains.

The catalysed reaction is (1S,2R)-1-C-(indol-3-yl)glycerol 3-phosphate + L-serine = D-glyceraldehyde 3-phosphate + L-tryptophan + H2O. It participates in amino-acid biosynthesis; L-tryptophan biosynthesis; L-tryptophan from chorismate: step 5/5. In terms of biological role, the alpha subunit is responsible for the aldol cleavage of indoleglycerol phosphate to indole and glyceraldehyde 3-phosphate. In Campylobacter jejuni subsp. doylei (strain ATCC BAA-1458 / RM4099 / 269.97), this protein is Tryptophan synthase alpha chain.